Reading from the N-terminus, the 200-residue chain is Glycerol-3-phosphate acyltransferase (200 aa).

Transmembrane regions (helical) follow at residues Phe2–Val22, Lys51–Ala71, Ala84–Phe104, Leu114–Val134, and Phe159–Phe179.

Belongs to the PlsY family. Probably interacts with PlsX.

The protein resides in the cell inner membrane. It carries out the reaction an acyl phosphate + sn-glycerol 3-phosphate = a 1-acyl-sn-glycero-3-phosphate + phosphate. It participates in lipid metabolism; phospholipid metabolism. Its function is as follows. Catalyzes the transfer of an acyl group from acyl-phosphate (acyl-PO(4)) to glycerol-3-phosphate (G3P) to form lysophosphatidic acid (LPA). This enzyme utilizes acyl-phosphate as fatty acyl donor, but not acyl-CoA or acyl-ACP. This Neisseria meningitidis serogroup C / serotype 2a (strain ATCC 700532 / DSM 15464 / FAM18) protein is Glycerol-3-phosphate acyltransferase.